A 500-amino-acid polypeptide reads, in one-letter code: Probable cytosol aminopeptidase (500 aa).

Residues Lys264 and Asp269 each coordinate Mn(2+). Lys276 is an active-site residue. Residues Asp287, Asp346, and Glu348 each coordinate Mn(2+). Arg350 is a catalytic residue.

This sequence belongs to the peptidase M17 family. It depends on Mn(2+) as a cofactor.

The protein localises to the cytoplasm. The enzyme catalyses Release of an N-terminal amino acid, Xaa-|-Yaa-, in which Xaa is preferably Leu, but may be other amino acids including Pro although not Arg or Lys, and Yaa may be Pro. Amino acid amides and methyl esters are also readily hydrolyzed, but rates on arylamides are exceedingly low.. It catalyses the reaction Release of an N-terminal amino acid, preferentially leucine, but not glutamic or aspartic acids.. Its function is as follows. Presumably involved in the processing and regular turnover of intracellular proteins. Catalyzes the removal of unsubstituted N-terminal amino acids from various peptides. In Nitrobacter winogradskyi (strain ATCC 25391 / DSM 10237 / CIP 104748 / NCIMB 11846 / Nb-255), this protein is Probable cytosol aminopeptidase.